The primary structure comprises 740 residues: ATP-dependent RNA helicase DDX1 (740 aa).

Residues 1–295 are necessary for interaction with HNRNPK; it reads MAAFSEMGVM…APKALIVEPS (295 aa). The interaction with dsRNA stretch occupies residues 1–448; the sequence is MAAFSEMGVM…DTVHHVVVPV (448 aa). The necessary for interaction with RELA stretch occupies residues 1–525; sequence MAAFSEMGVM…KIDCDNLEQY (525 aa). Residues 2-428 enclose the Helicase ATP-binding domain; sequence AAFSEMGVMP…SEKIMHFPTW (427 aa). 46 to 53 contacts ATP; the sequence is AETGSGKT. The region spanning 70–247 is the B30.2/SPRY domain; it reads DQQEGKKGKT…LKFNFGEEEF (178 aa). Residues Lys239 and Lys268 each carry the N6-acetyllysine modification. N6-acetyllysine; alternate is present on Lys281. A Glycyl lysine isopeptide (Lys-Gly) (interchain with G-Cter in SUMO2); alternate cross-link involves residue Lys281. The short motif at 370–373 is the DEAD box element; that stretch reads DEAD. Ser481 is subject to Phosphoserine. The Helicase C-terminal domain maps to 493–681; the sequence is KGEYAVRAIK…QVEPDIKVPV (189 aa). A necessary for interaction with HNRNPK region spans residues 525–740; the sequence is YFMQQGGGPD…YLPNQLFRTF (216 aa).

It belongs to the DEAD box helicase family. DDX1 subfamily. Found in a multi-helicase-TICAM1 complex at least composed of DHX36, DDX1, DDX21 and TICAM1; this complex exists in resting cells with or without poly(I:C) RNA ligand stimulation. Interacts with DHX36. Interacts (via B30.2/SPRY domain) with DDX21 (via N-terminus); this interaction serves as bridges to TICAM1. Interacts with FAM98A (via N- and C-terminus). Interacts with PHF5A (via C-terminus). Interacts with MBNL1. Interacts with CSTF2. Interacts with HNRNPK. Interacts with ATM. Interacts with RELA (via C-terminus). Component of the tRNA-splicing ligase complex. Interacts with PQBP1. Interacts with ERCC6. Phosphorylated by ATM kinase; phosphorylation is increased in response to ionizing radiation (IR).

The protein localises to the nucleus. Its subcellular location is the cytoplasm. It localises to the cytoplasmic granule. The protein resides in the cytosol. It is found in the mitochondrion. The enzyme catalyses ATP + H2O = ADP + phosphate + H(+). Functionally, acts as an ATP-dependent RNA helicase, able to unwind both RNA-RNA and RNA-DNA duplexes. Possesses 5' single-stranded RNA overhang nuclease activity. Possesses ATPase activity on various RNA, but not DNA polynucleotides. May play a role in RNA clearance at DNA double-strand breaks (DSBs), thereby facilitating the template-guided repair of transcriptionally active regions of the genome. Together with RELA, acts as a coactivator to enhance NF-kappa-B-mediated transcriptional activation. Acts as a positive transcriptional regulator of cyclin CCND2 expression. Binds to the cyclin CCND2 promoter region. Associates with chromatin at the NF-kappa-B promoter region via association with RELA. Binds to poly(A) RNA. May be involved in 3'-end cleavage and polyadenylation of pre-mRNAs. Component of the tRNA-splicing ligase complex required to facilitate the enzymatic turnover of catalytic subunit RTCB: together with archease (ZBTB8OS), acts by facilitating the guanylylation of RTCB, a key intermediate step in tRNA ligation. Component of a multi-helicase-TICAM1 complex that acts as a cytoplasmic sensor of viral double-stranded RNA (dsRNA) and plays a role in the activation of a cascade of antiviral responses including the induction of pro-inflammatory cytokines via the adapter molecule TICAM1. Specifically binds (via helicase ATP-binding domain) on both short and long poly(I:C) dsRNA. The protein is ATP-dependent RNA helicase DDX1 (DDX1) of Macaca fascicularis (Crab-eating macaque).